The following is a 146-amino-acid chain: VHLTGEEKAAVTALWGKVNVDEVGGEALGRLLVVYPWTQRFFDSFGDLSSPDAVMNNPKVKAHGKKVLGAFSDGLAHLDNLKGTFAQLSELHCDKLHVDPENFRLLGNVLVCVLAHHFGKEFTPQVQAAYQKVVAGVANALAHKYH.

Val1 carries the post-translational modification N-acetylvaline. The Globin domain maps to 2–146; sequence HLTGEEKAAV…VANALAHKYH (145 aa). Thr12 carries the phosphothreonine modification. At Ser44 the chain carries Phosphoserine. Lys59 is modified (N6-acetyllysine). His63 contacts heme b. Residue Lys82 is modified to N6-acetyllysine. Residue His92 coordinates heme b. Cys93 is modified (S-nitrosocysteine). Position 144 is an N6-acetyllysine (Lys144).

It belongs to the globin family. As to quaternary structure, heterotetramer of two alpha chains and two beta chains. Red blood cells.

Functionally, involved in oxygen transport from the lung to the various peripheral tissues. This chain is Hemoglobin subunit beta (HBB), found in Aotus trivirgatus (Three-striped night monkey).